A 365-amino-acid chain; its full sequence is Chorismate synthase (365 aa).

Positions 41–51 (IQKELDRRRPG) are enriched in basic and acidic residues. Residues 41–62 (IQKELDRRRPGQSEVSTPRSEA) are disordered. An NADP(+)-binding site is contributed by Arg-48. FMN-binding positions include 125 to 127 (RSS), Gly-285, 300 to 304 (KPTPS), and Arg-327.

This sequence belongs to the chorismate synthase family. FMNH2 is required as a cofactor.

The catalysed reaction is 5-O-(1-carboxyvinyl)-3-phosphoshikimate = chorismate + phosphate. The protein operates within metabolic intermediate biosynthesis; chorismate biosynthesis; chorismate from D-erythrose 4-phosphate and phosphoenolpyruvate: step 7/7. Functionally, catalyzes the anti-1,4-elimination of the C-3 phosphate and the C-6 proR hydrogen from 5-enolpyruvylshikimate-3-phosphate (EPSP) to yield chorismate, which is the branch point compound that serves as the starting substrate for the three terminal pathways of aromatic amino acid biosynthesis. This reaction introduces a second double bond into the aromatic ring system. The sequence is that of Chorismate synthase from Methanosarcina acetivorans (strain ATCC 35395 / DSM 2834 / JCM 12185 / C2A).